The chain runs to 485 residues: MKKQPKMTAIALILSGISGLAYGHGYVSAVENGVAEGRVTLCKFAANGTGEKNTHCGAIQYEPQSVEGPDGFPVTGPRDGKIASAESALAAALDEQTADRWVKRPIQAGPQTFEWTFTANHVTKDWKYYITKPNWNPNQPLSRDAFDLNPFCVVEGNMVQPPKRVSHECIVPEREGYQVILAVWDVGDTAASFYNVIDVKFDGNGPVLPDWNPAGQIIPSMDLSIGDTVYTRVFDNEGENPAYRTELKIDSETLTKANQWSYALATKINQTQKQQRAGQLNGDQFVPVYGTNPIYLKEGSGLKSVEIGYQIEAPQPEYSLTVSGLAKEYEIGEQPIQLDLTLEAQGEMSAELTVYNHHQKPLASWSQAMTDGELKSVTLELSEAKAGHHMLVSRIKDRDGNLQDQQTLDFMLVEPQTPPTPGDYDFVFPNGLKEYVAGTKVLASDGAIYQCKPWPYSGYCQQWTSNATQYQPGTGSHWEMAWDKR.

An N-terminal signal peptide occupies residues 1-23 (MKKQPKMTAIALILSGISGLAYG). Positions 24 to 201 (HGYVSAVENG…SFYNVIDVKF (178 aa)) constitute a Chitin-binding type-4 domain. The Chitin-binding type-3 domain occupies 437–478 (AGTKVLASDGAIYQCKPWPYSGYCQQWTSNATQYQPGTGSHW).

The protein belongs to the GbpA family.

It is found in the secreted. Its function is as follows. Probably interacts with GlcNAc residues. May promote attachment to both epithelial cell surfaces and chitin. This is GlcNAc-binding protein A from Vibrio cholerae serotype O1 (strain ATCC 39541 / Classical Ogawa 395 / O395).